The primary structure comprises 310 residues: MVGRFVMETLRGRDLLSIADLSRAEAEYLLDLAAQMKIGKVAPQCPKVLGLLFQKASTRTRVSFTVAMYQLGGQVIDLNPQSTQVGRGEPLTDTARVLDRYLDAVAIRTYGQAELQLFADYARIPVINALTDREHPCQILADLLTLRESFGTLAGLTLCYIGDGNNVAHSLLLGCALLGVNIRVASPPQFAPLADIVAQAKALSGGKSEVAVLTDPQAAAKGAHALYTDVWASMGQEAEAGDRQPIFQPYQINDHLLALADPRAIVLHCLPAHRDEEITASVLEGPQSRVWEQAENRLHVQKALLASLLV.

Residues 57-60 (STRT), Q84, R108, and 135-138 (HPCQ) contribute to the carbamoyl phosphate site. L-ornithine contacts are provided by residues N166, D229, and 233–234 (SM). Carbamoyl phosphate is bound by residues 269 to 270 (CL) and R297.

The protein belongs to the aspartate/ornithine carbamoyltransferase superfamily. OTCase family.

The protein resides in the cytoplasm. The catalysed reaction is carbamoyl phosphate + L-ornithine = L-citrulline + phosphate + H(+). The protein operates within amino-acid biosynthesis; L-arginine biosynthesis; L-arginine from L-ornithine and carbamoyl phosphate: step 1/3. Reversibly catalyzes the transfer of the carbamoyl group from carbamoyl phosphate (CP) to the N(epsilon) atom of ornithine (ORN) to produce L-citrulline. The polypeptide is Ornithine carbamoyltransferase (Thermosynechococcus vestitus (strain NIES-2133 / IAM M-273 / BP-1)).